We begin with the raw amino-acid sequence, 176 residues long: Ribosome rescue factor SmrB (176 aa).

In terms of domain architecture, Smr spans 93-168 (LDLHGYRQSE…GDAALLVLID (76 aa)).

The protein belongs to the SmrB family. Associates with collided ribosomes, but not with correctly translating polysomes.

Its function is as follows. Acts as a ribosome collision sensor. Detects stalled/collided disomes (pairs of ribosomes where the leading ribosome is stalled and a second ribosome has collided with it) and endonucleolytically cleaves mRNA at the 5' boundary of the stalled ribosome. Stalled/collided disomes form a new interface (primarily via the 30S subunits) that binds SmrB. Cleaved mRNA becomes available for tmRNA ligation, leading to ribosomal subunit dissociation and rescue of stalled ribosomes. The sequence is that of Ribosome rescue factor SmrB from Shewanella baltica (strain OS223).